We begin with the raw amino-acid sequence, 183 residues long: ATP synthase subunit delta (183 aa).

This sequence belongs to the ATPase delta chain family. As to quaternary structure, F-type ATPases have 2 components, F(1) - the catalytic core - and F(0) - the membrane proton channel. F(1) has five subunits: alpha(3), beta(3), gamma(1), delta(1), epsilon(1). F(0) has three main subunits: a(1), b(2) and c(10-14). The alpha and beta chains form an alternating ring which encloses part of the gamma chain. F(1) is attached to F(0) by a central stalk formed by the gamma and epsilon chains, while a peripheral stalk is formed by the delta and b chains.

The protein resides in the cell inner membrane. Functionally, f(1)F(0) ATP synthase produces ATP from ADP in the presence of a proton or sodium gradient. F-type ATPases consist of two structural domains, F(1) containing the extramembraneous catalytic core and F(0) containing the membrane proton channel, linked together by a central stalk and a peripheral stalk. During catalysis, ATP synthesis in the catalytic domain of F(1) is coupled via a rotary mechanism of the central stalk subunits to proton translocation. Its function is as follows. This protein is part of the stalk that links CF(0) to CF(1). It either transmits conformational changes from CF(0) to CF(1) or is implicated in proton conduction. The sequence is that of ATP synthase subunit delta from Syntrophobacter fumaroxidans (strain DSM 10017 / MPOB).